The chain runs to 130 residues: TGSCCGPTFSSLSCGGGCLQPCCYRDPCCCRPVSSTQTVSRPVTFVSRCTRPICEPCRRPVCCDPCSLQEGCCRPITCCPTSCQAVVCRPCCWATTCCQPVSVQCPCCRPTSCPSAPRTTCRTFRTSPCC.

As to expression, wool.

Its function is as follows. The keratin products of mammalian epidermal derivatives such as wool and hair consist of microfibrils embedded in a rigid matrix of other proteins. The matrix proteins include the high-sulfur and high-tyrosine keratins, having molecular weights of 6-20 kDa, whereas the microfibrils contain the larger, low-sulfur keratins (40-56 kDa). The polypeptide is Keratin, high-sulfur matrix protein, IIIA3A (Ovis aries (Sheep)).